A 203-amino-acid polypeptide reads, in one-letter code: tRNA (pseudouridine(54)-N(1))-methyltransferase (203 aa).

Positions 125, 146, and 179 each coordinate S-adenosyl-L-methionine.

It belongs to the methyltransferase superfamily. TrmY family. Homodimer.

It is found in the cytoplasm. It carries out the reaction pseudouridine(54) in tRNA + S-adenosyl-L-methionine = N(1)-methylpseudouridine(54) in tRNA + S-adenosyl-L-homocysteine + H(+). In terms of biological role, specifically catalyzes the N1-methylation of pseudouridine at position 54 (Psi54) in tRNAs. The polypeptide is tRNA (pseudouridine(54)-N(1))-methyltransferase (Methanopyrus kandleri (strain AV19 / DSM 6324 / JCM 9639 / NBRC 100938)).